We begin with the raw amino-acid sequence, 252 residues long: Phosphate import ATP-binding protein PstB 1 (252 aa).

One can recognise an ABC transporter domain in the interval 6–247 (ISSKDLHLYY…PKEKQTEDYI (242 aa)). 38 to 45 (GPSGCGKS) is an ATP binding site.

Belongs to the ABC transporter superfamily. Phosphate importer (TC 3.A.1.7) family. The complex is composed of two ATP-binding proteins (PstB), two transmembrane proteins (PstC and PstA) and a solute-binding protein (PstS).

The protein resides in the cell membrane. It catalyses the reaction phosphate(out) + ATP + H2O = ADP + 2 phosphate(in) + H(+). Part of the ABC transporter complex PstSACB involved in phosphate import. Responsible for energy coupling to the transport system. The protein is Phosphate import ATP-binding protein PstB 1 of Enterococcus faecalis (strain ATCC 700802 / V583).